A 231-amino-acid polypeptide reads, in one-letter code: Isoprenyl transferase (231 aa).

Aspartate 14 is an active-site residue. Aspartate 14 is a Mg(2+) binding site. Substrate-binding positions include 15-18, tryptophan 19, arginine 27, histidine 31, and 59-61; these read GNGR and STE. Asparagine 62 serves as the catalytic Proton acceptor. Residues tryptophan 63, arginine 65, arginine 176, and 182–184 contribute to the substrate site; that span reads RIS. Glutamate 195 is a binding site for Mg(2+).

This sequence belongs to the UPP synthase family. Homodimer. The cofactor is Mg(2+).

In terms of biological role, catalyzes the condensation of isopentenyl diphosphate (IPP) with allylic pyrophosphates generating different type of terpenoids. This chain is Isoprenyl transferase, found in Aquifex aeolicus (strain VF5).